A 1533-amino-acid chain; its full sequence is DNA topoisomerase 2-alpha (1533 aa).

N-acetylmethionine is present on methionine 1. Residues 1 to 22 form a disordered region; sequence MEVSPLQPVNENMQVNKTKKNE. A Phosphoserine modification is found at serine 4. Over residues 7-16 the composition is skewed to polar residues; the sequence is QPVNENMQVN. Residue lysine 17 forms a Glycyl lysine isopeptide (Lys-Gly) (interchain with G-Cter in SUMO2) linkage. ATP contacts are provided by residues asparagine 91, asparagine 120, and 148–150; that span reads SSN. Glycyl lysine isopeptide (Lys-Gly) (interchain with G-Cter in SUMO2) cross-links involve residues lysine 156 and lysine 157. 161–168 contacts ATP; the sequence is GRNGYGAK. A Glycyl lysine isopeptide (Lys-Gly) (interchain with G-Cter in SUMO2) cross-link involves residue lysine 261. Threonine 282 bears the Phosphothreonine mark. The tract at residues 342 to 344 is interaction with DNA; the sequence is KKK. Lysine 352 is covalently cross-linked (Glycyl lysine isopeptide (Lys-Gly) (interchain with G-Cter in SUMO2)). 376–378 contributes to the ATP binding site; the sequence is QTK. Glycyl lysine isopeptide (Lys-Gly) (interchain with G-Cter in SUMO2) cross-links involve residues lysine 386, lysine 397, lysine 416, lysine 418, lysine 425, and lysine 440. A Toprim domain is found at 455–572; the sequence is CTLILTEGDS…SLLRHRFLEE (118 aa). Glutamate 461 contacts Mg(2+). Glycyl lysine isopeptide (Lys-Gly) (interchain with G-Cter in SUMO2) cross-links involve residues lysine 466, lysine 480, and lysine 529. 2 residues coordinate Mg(2+): aspartate 541 and aspartate 543. Glycyl lysine isopeptide (Lys-Gly) (interchain with G-Cter in SUMO2) cross-links involve residues lysine 584, lysine 599, lysine 614, lysine 622, lysine 625, lysine 632, lysine 639, lysine 655, lysine 662, and lysine 676. A Topo IIA-type catalytic domain is found at 715–1171; the sequence is IPSMVDGLKP…SPSDLWKEDL (457 aa). The O-(5'-phospho-DNA)-tyrosine intermediate role is filled by tyrosine 805. An interaction with DNA region spans residues 990–999; it reads KLQTSLTCNS. Lysine 1075 is covalently cross-linked (Glycyl lysine isopeptide (Lys-Gly) (interchain with G-Cter in SUMO2)). Disordered stretches follow at residues 1090 to 1121 and 1183 to 1215; these read WKEA…VADS and AKEK…PSPC. Residues 1099–1108 are compositionally biased toward acidic residues; that stretch reads DEEENEESDN. Serine 1106 carries the post-translational modification Phosphoserine; by CK1. Glycyl lysine isopeptide (Lys-Gly) (interchain with G-Cter in SUMO2) cross-links involve residues lysine 1114, lysine 1196, and lysine 1204. Threonine 1205 is modified (phosphothreonine). Serine 1213 carries the post-translational modification Phosphoserine. Residue lysine 1228 forms a Glycyl lysine isopeptide (Lys-Gly) (interchain with G-Cter in SUMO2) linkage. A disordered region spans residues 1231–1533; the sequence is AEKKIKKKIK…LEESDEDDLF (303 aa). Residue lysine 1240 forms a Glycyl lysine isopeptide (Lys-Gly) (interchain with G-Cter in SUMO1); alternate linkage. Lysine 1240 participates in a covalent cross-link: Glycyl lysine isopeptide (Lys-Gly) (interchain with G-Cter in SUMO2); alternate. Threonine 1244 is subject to Phosphothreonine. A Phosphoserine modification is found at serine 1247. Residues 1256–1272 are compositionally biased toward basic and acidic residues; sequence EGLKQRLEKKQKREPGT. Residues lysine 1259, lysine 1276, lysine 1283, and lysine 1286 each participate in a glycyl lysine isopeptide (Lys-Gly) (interchain with G-Cter in SUMO2) cross-link. A phosphoserine mark is found at serine 1295, serine 1297, serine 1299, and serine 1302. Threonine 1327 bears the Phosphothreonine mark. Phosphoserine occurs at positions 1332 and 1337. Threonine 1343 is modified (phosphothreonine). Serine 1351 and serine 1354 each carry phosphoserine. Residues 1360–1371 are compositionally biased toward basic and acidic residues; it reads TSPKHTNKEPKP. Glycyl lysine isopeptide (Lys-Gly) (interchain with G-Cter in SUMO2) cross-links involve residues lysine 1363, lysine 1367, and lysine 1373. Phosphoserine is present on residues serine 1374 and serine 1377. Lysine 1387 participates in a covalent cross-link: Glycyl lysine isopeptide (Lys-Gly) (interchain with G-Cter in SUMO2). 2 positions are modified to phosphoserine: serine 1393 and serine 1395. The segment covering 1409 to 1433 has biased composition (low complexity); sequence KPVSKKNVTVKKTAAKSQSSTSTTG. Lysine 1424 participates in a covalent cross-link: Glycyl lysine isopeptide (Lys-Gly) (interchain with G-Cter in SUMO2); alternate. Lysine 1424 is modified (N6-acetyllysine; alternate). Residues 1435–1441 form an interaction with PLSCR1 region; the sequence is KKRAAPK. The segment covering 1443–1455 has biased composition (basic and acidic residues); that stretch reads AKKDPDLDSDVSK. Lysine 1444 is covalently cross-linked (Glycyl lysine isopeptide (Lys-Gly) (interchain with G-Cter in SUMO2); alternate). The residue at position 1444 (lysine 1444) is an N6-acetyllysine; alternate. At serine 1451 the chain carries Phosphoserine. Residues lysine 1456 and lysine 1461 each participate in a glycyl lysine isopeptide (Lys-Gly) (interchain with G-Cter in SUMO2) cross-link. At serine 1471 the chain carries Phosphoserine. Threonine 1472 is subject to Phosphothreonine. Phosphoserine occurs at positions 1473, 1476, and 1478. Glycyl lysine isopeptide (Lys-Gly) (interchain with G-Cter in SUMO2) cross-links involve residues lysine 1486 and lysine 1494. The segment covering 1493–1504 has biased composition (basic and acidic residues); that stretch reads PKGESDDFHLDL. Phosphoserine is present on residues serine 1497 and serine 1527.

Belongs to the type II topoisomerase family. As to quaternary structure, homodimer. Interacts with COPS5. Interacts with RECQL5; this stimulates DNA decatenation. Interacts with SETMAR; stimulates the topoisomerase activity. Interacts with DHX9; this interaction occurs in a E2 enzyme UBE2I- and RNA-dependent manner, negatively regulates DHX9-mediated double-stranded DNA and RNA duplex helicase activity and stimulates TOP2A-mediated supercoiled DNA relaxation activity. Interacts with HNRNPU (via C-terminus); this interaction protects the topoisomerase TOP2A from degradation and positively regulates the relaxation of supercoiled DNA in a RNA-dependent manner. Interacts with MCM3AP. Interacts with ERCC6. Interacts with PLSCR1. Interacts with GCNA; this interaction allows the resolution of topoisomerase II (TOP2A) DNA-protein cross-links. Interacts with POL1RA/RPA1 (via dock II) and UBTF in the context of Pol I complex; may assist Pol I transcription initiation by releasing supercoils occurring during DNA unwinding. Interacts with TPRN; TPRN interacts with a number of DNA damage response proteins, is recruited to sites of DNA damage and may play a role in DNA damage repair. Mg(2+) serves as cofactor. The cofactor is Mn(2+). Ca(2+) is required as a cofactor. In terms of processing, phosphorylation has no effect on catalytic activity. However, phosphorylation at Ser-1106 by CSNK1D/CK1 promotes DNA cleavable complex formation.

Its subcellular location is the cytoplasm. It is found in the nucleus. It localises to the nucleoplasm. The protein localises to the nucleolus. It carries out the reaction ATP-dependent breakage, passage and rejoining of double-stranded DNA.. In terms of biological role, key decatenating enzyme that alters DNA topology by binding to two double-stranded DNA molecules, generating a double-stranded break in one of the strands, passing the intact strand through the broken strand, and religating the broken strand. May play a role in regulating the period length of BMAL1 transcriptional oscillation. The protein is DNA topoisomerase 2-alpha (TOP2A) of Sus scrofa (Pig).